We begin with the raw amino-acid sequence, 100 residues long: NADH-quinone oxidoreductase subunit K (100 aa).

3 helical membrane-spanning segments follow: residues 4–24, 29–49, and 60–80; these read LNYG…SLLI, IFIL…FILI, and VLYI…LAIF.

This sequence belongs to the complex I subunit 4L family. NDH-1 is composed of 13 different subunits. Subunits NuoA, H, J, K, L, M, N constitute the membrane sector of the complex.

It is found in the cell membrane. It carries out the reaction a quinone + NADH + 5 H(+)(in) = a quinol + NAD(+) + 4 H(+)(out). Its function is as follows. NDH-1 shuttles electrons from NADH, via FMN and iron-sulfur (Fe-S) centers, to quinones in the respiratory chain. The immediate electron acceptor for the enzyme in this species is believed to be ubiquinone. Couples the redox reaction to proton translocation (for every two electrons transferred, four hydrogen ions are translocated across the cytoplasmic membrane), and thus conserves the redox energy in a proton gradient. The sequence is that of NADH-quinone oxidoreductase subunit K from Buchnera aphidicola subsp. Cinara cedri (strain Cc).